We begin with the raw amino-acid sequence, 411 residues long: MNSIFSIDDFSDPFWETPPIPLNPDSSKPVTADEVSQSQPEWTFEMFLEEISSSAVSSEPLGNNNNAIVGVSSAQSLPSVSGQNDFEDDSRFRDRDSGNLDCAAPMTTKTVIVDSDDYRRVLKNKLETECATVVSLRVGSVKPEDSTSSPETQLQPVQSSPLTQGELGVTSSLPAEVKKTGVSMKQVTSGSSREYSDDEDLDEENETTGSLKPEDVKKSRRMLSNRESARRSRRRKQEQTSDLETQVNDLKGEHSSLLKQLSNMNHKYDEAAVGNRILKADIETLRAKVKMAEETVKRVTGMNPMLLGRSSGHNNNNRMPITGNNRMDSSSIIPAYQPHSNLNHMSNQNIGIPTILPPRLGNNFAAPPSQTSSPLQRIRNGQNHHVTPSANPYGWNTEPQNDSAWPKKCVD.

4 disordered regions span residues 1–36 (MNSI…DEVS), 76–99 (SLPS…DSGN), 140–251 (SVKP…NDLK), and 362–411 (NNFA…KCVD). The segment covering 24 to 36 (PDSSKPVTADEVS) has biased composition (polar residues). Over residues 89–98 (DSRFRDRDSG) the composition is skewed to basic and acidic residues. Polar residues-rich tracts occupy residues 146 to 173 (STSS…TSSL) and 183 to 193 (SMKQVTSGSSR). Serine 196 carries the post-translational modification Phosphoserine. Residues 196 to 206 (SDDEDLDEENE) show a composition bias toward acidic residues. Positions 215–278 (DVKKSRRMLS…DEAAVGNRIL (64 aa)) constitute a bZIP domain. Positions 217–236 (KKSRRMLSNRESARRSRRRK) are basic motif. Residues 219-226 (SRRMLSNR) carry the Nuclear localization signal motif. The tract at residues 243–257 (LETQVNDLKGEHSSL) is leucine-zipper. Residues 368–390 (PSQTSSPLQRIRNGQNHHVTPSA) are compositionally biased toward polar residues.

Belongs to the bZIP family. In terms of assembly, forms a heterodimer with BZIP1, BZIP2, BZIP9, BZIP11, BZIP44, BZIP53 and BZIP63. Interacts with ABI3 and forms a complex made of ABI3, BZIP53 and BZIP10. Binding with LSD1 leads to cytoplasmic retention. As to expression, expressed in roots, shoots, stems, young leaves, trichomes, hydathodes, siliques, seeds, and flowers, mostly in vascular tissues.

Its subcellular location is the nucleus. It is found in the cytoplasm. In terms of biological role, transcription factor that binds to the C-box-like motif (5'-TGCTGACGTCA-3') and G-box-like motif (5'-CCACGTGGCC-3'), ABRE elements, of gene promoters. Binds to the 5'-ACGT-3' motif of seed storage protein (SSP) encoding gene promoters (e.g. At2S and CRU3) and promotes their expression in seeds when in complex with ABI3 and BZIP53. Involved in the defense responses to the biotrophic pathogen Hyaloperonospora parasitica and oxidative stress responses; mediates positively cell death. Promotes BZIP53-mediated response to hypoosmolarity stress that leads to POX1/PRODH1 accumulation. This Arabidopsis thaliana (Mouse-ear cress) protein is Basic leucine zipper 10 (BZIP10).